The following is a 177-amino-acid chain: MVNLWEDMETGPNAPDEIYAVVECLKGERNKYEYDKDIPGVVLDRVLHSNVHYPSDYGFIPQTYYDDEDPFDVLVLVEDQTFPGCVIEARPVALMKMDDDGEQDDKVIAVPVEDPRYDHIEDLDDIPQQTLDEIDEFFATYKNLEAGKEVETLGWEDKQAAKDAIEHAMDLYEENFA.

Lysine 31, arginine 45, and tyrosine 57 together coordinate substrate. Residues aspartate 67, aspartate 72, and aspartate 104 each contribute to the Mg(2+) site. Tyrosine 141 contributes to the substrate binding site.

Belongs to the PPase family. Homohexamer. Also forms homotrimers, but the trimeric form is 23% less active than the hexamer. In fact, likely forms a dimer of trimers. The cofactor is Mg(2+).

It localises to the cytoplasm. It carries out the reaction diphosphate + H2O = 2 phosphate + H(+). With respect to regulation, inhibited by sodium fluoride (NaF) in vitro, similarly to other class A type inorganic pyrophosphatases. In terms of biological role, catalyzes the hydrolysis of inorganic pyrophosphate (PPi) forming two phosphate ions. The hydrolysis of PPi by inorganic pyrophosphatase releases a considerable amount of energy that can drive unfavorable biochemical transformations to completion. Is not active on nucleoside triphosphates (ATP, TTP, GTP, or CTP) or nucleoside diphosphate (ADP). The sequence is that of Inorganic pyrophosphatase from Haloferax volcanii (strain ATCC 29605 / DSM 3757 / JCM 8879 / NBRC 14742 / NCIMB 2012 / VKM B-1768 / DS2) (Halobacterium volcanii).